Reading from the N-terminus, the 317-residue chain is Ribosomal protein L11 methyltransferase (317 aa).

4 residues coordinate S-adenosyl-L-methionine: threonine 158, glycine 179, aspartate 201, and asparagine 244.

It belongs to the methyltransferase superfamily. PrmA family.

Its subcellular location is the cytoplasm. It catalyses the reaction L-lysyl-[protein] + 3 S-adenosyl-L-methionine = N(6),N(6),N(6)-trimethyl-L-lysyl-[protein] + 3 S-adenosyl-L-homocysteine + 3 H(+). Its function is as follows. Methylates ribosomal protein L11. The polypeptide is Ribosomal protein L11 methyltransferase (Streptococcus agalactiae serotype Ia (strain ATCC 27591 / A909 / CDC SS700)).